The primary structure comprises 478 residues: Transposase for insertion sequence element IS231D (478 aa).

Belongs to the transposase 11 family.

In terms of biological role, involved in the transposition of the insertion sequence. The chain is Transposase for insertion sequence element IS231D from Bacillus thuringiensis subsp. finitimus.